We begin with the raw amino-acid sequence, 458 residues long: Argininosuccinate lyase (458 aa).

The protein belongs to the lyase 1 family. Argininosuccinate lyase subfamily.

It is found in the cytoplasm. It carries out the reaction 2-(N(omega)-L-arginino)succinate = fumarate + L-arginine. The protein operates within amino-acid biosynthesis; L-arginine biosynthesis; L-arginine from L-ornithine and carbamoyl phosphate: step 3/3. This is Argininosuccinate lyase from Salmonella schwarzengrund (strain CVM19633).